Reading from the N-terminus, the 340-residue chain is N-acetyl-gamma-glutamyl-phosphate reductase (340 aa).

Residue cysteine 146 is part of the active site.

The protein belongs to the NAGSA dehydrogenase family. Type 1 subfamily.

The protein localises to the cytoplasm. The catalysed reaction is N-acetyl-L-glutamate 5-semialdehyde + phosphate + NADP(+) = N-acetyl-L-glutamyl 5-phosphate + NADPH + H(+). Its pathway is amino-acid biosynthesis; L-arginine biosynthesis; N(2)-acetyl-L-ornithine from L-glutamate: step 3/4. Functionally, catalyzes the NADPH-dependent reduction of N-acetyl-5-glutamyl phosphate to yield N-acetyl-L-glutamate 5-semialdehyde. This is N-acetyl-gamma-glutamyl-phosphate reductase from Streptococcus sanguinis (strain SK36).